A 247-amino-acid polypeptide reads, in one-letter code: ATP synthase subunit a, chloroplastic (247 aa).

Helical transmembrane passes span 38-58, 95-115, 134-154, 199-219, and 220-240; these read QVLI…ALAV, VPFI…GALL, INTT…AGLT, LVVV…VMFL, and GLFT…AYIG.

Belongs to the ATPase A chain family. F-type ATPases have 2 components, CF(1) - the catalytic core - and CF(0) - the membrane proton channel. CF(1) has five subunits: alpha(3), beta(3), gamma(1), delta(1), epsilon(1). CF(0) has four main subunits: a, b, b' and c.

The protein resides in the plastid. It is found in the chloroplast thylakoid membrane. Its function is as follows. Key component of the proton channel; it plays a direct role in the translocation of protons across the membrane. The sequence is that of ATP synthase subunit a, chloroplastic from Helianthus annuus (Common sunflower).